Consider the following 505-residue polypeptide: Actin nucleation-promoting factor WASL (505 aa).

At S2 the chain carries N-acetylserine. Residues 34 to 141 form the WH1 domain; sequence LGKKCVTMSS…KAVTDLLGRR (108 aa). 2 disordered regions span residues 138 to 163 and 184 to 205; these read LGRR…ATVD and HTKE…DIGT. The span at 186 to 198 shows a compositional bias: basic residues; sequence KEKKKGKAKKKRL. Residues 203 to 216 enclose the CRIB domain; that stretch reads IGTPSNFQHIGHVG. Position 242 is a phosphoserine; by TNK2 (S242). The residue at position 256 (Y256) is a Phosphotyrosine; by FAK1 and TNK2. Positions 266–406 are disordered; that stretch reads EAVKNELRRQ…HQVPTTAGNK (141 aa). Composition is skewed to pro residues over residues 276 to 364 and 371 to 391; these read APPP…PPPS and VAPP…PPGL. Omega-N-methylarginine is present on R307. WH2 domains follow at residues 405 to 422 and 433 to 450; these read NKAA…LKKV and GRDA…LKSV. The tract at residues 476-505 is disordered; the sequence is QKRSKAIHSSDEDEDEDDEEDFEDDDEWED. Residues S484 and S485 each carry the phosphoserine modification. Positions 486-505 are enriched in acidic residues; that stretch reads DEDEDEDDEEDFEDDDEWED.

In terms of assembly, binds actin and the Arp2/3 complex. Interacts with CDC42. Interacts with FCHSD1. Interacts with FCHSD2. Binds to SH3 domains of GRB2. Interacts with the C-terminal SH3 domain of DNMBP. Interacts with SNX9. Interacts with the WW domains of PRPF40A/FBP11. Interacts with PTK2/FAK1. Interacts with PACSIN1, PACSIN2 and PACSIN3. Interacts with NOSTRIN. Binds to TNK2. Interacts with SNX33. Interacts with NONO (via second RRM domain); the interaction is direct. Component of a multiprotein complex with NONO and SFPQ; associates with the complex via direct interaction with NONO. As to quaternary structure, (Microbial infection) Interacts with E.coli effector protein EspF(U). Identified in a complex containing at least WASL, BAIAP2L1 and E.coli EspF(U). (Microbial infection) Interacts with Shigella flexneri protein IcsA. The interaction with IcsA enhances the affinity of WASL for Arp2/3, thus assembling a tight complex which has maximal activity in actin assembly. Post-translationally, phosphorylation at Ser-242, Tyr-256, Ser-484 and Ser-485 enhances actin polymerization activity.

The protein localises to the cytoplasm. It localises to the cytoskeleton. It is found in the nucleus. Regulates actin polymerization by stimulating the actin-nucleating activity of the Arp2/3 complex. Involved in various processes, such as mitosis and cytokinesis, via its role in the regulation of actin polymerization. Together with CDC42, involved in the extension and maintenance of the formation of thin, actin-rich surface projections called filopodia. In addition to its role in the cytoplasm, also plays a role in the nucleus by regulating gene transcription, probably by promoting nuclear actin polymerization. Binds to HSF1/HSTF1 and forms a complex on heat shock promoter elements (HSE) that negatively regulates HSP90 expression. Plays a role in dendrite spine morphogenesis. Decreasing levels of DNMBP (using antisense RNA) alters apical junction morphology in cultured enterocytes, junctions curve instead of being nearly linear. This Homo sapiens (Human) protein is Actin nucleation-promoting factor WASL (WASL).